A 358-amino-acid chain; its full sequence is UDP-N-acetylglucosamine--N-acetylmuramyl-(pentapeptide) pyrophosphoryl-undecaprenol N-acetylglucosamine transferase (358 aa).

Residues 10 to 12 (TGG), Asn-124, Arg-165, Ser-187, Ile-243, and Gln-288 contribute to the UDP-N-acetyl-alpha-D-glucosamine site.

Belongs to the glycosyltransferase 28 family. MurG subfamily.

Its subcellular location is the cell inner membrane. The enzyme catalyses di-trans,octa-cis-undecaprenyl diphospho-N-acetyl-alpha-D-muramoyl-L-alanyl-D-glutamyl-meso-2,6-diaminopimeloyl-D-alanyl-D-alanine + UDP-N-acetyl-alpha-D-glucosamine = di-trans,octa-cis-undecaprenyl diphospho-[N-acetyl-alpha-D-glucosaminyl-(1-&gt;4)]-N-acetyl-alpha-D-muramoyl-L-alanyl-D-glutamyl-meso-2,6-diaminopimeloyl-D-alanyl-D-alanine + UDP + H(+). It functions in the pathway cell wall biogenesis; peptidoglycan biosynthesis. In terms of biological role, cell wall formation. Catalyzes the transfer of a GlcNAc subunit on undecaprenyl-pyrophosphoryl-MurNAc-pentapeptide (lipid intermediate I) to form undecaprenyl-pyrophosphoryl-MurNAc-(pentapeptide)GlcNAc (lipid intermediate II). The protein is UDP-N-acetylglucosamine--N-acetylmuramyl-(pentapeptide) pyrophosphoryl-undecaprenol N-acetylglucosamine transferase of Syntrophotalea carbinolica (strain DSM 2380 / NBRC 103641 / GraBd1) (Pelobacter carbinolicus).